A 156-amino-acid polypeptide reads, in one-letter code: Ribosomal RNA large subunit methyltransferase H (156 aa).

S-adenosyl-L-methionine-binding positions include leucine 74, glycine 105, and 124–129; that span reads LSKLTL.

The protein belongs to the RNA methyltransferase RlmH family. As to quaternary structure, homodimer.

It localises to the cytoplasm. It carries out the reaction pseudouridine(1915) in 23S rRNA + S-adenosyl-L-methionine = N(3)-methylpseudouridine(1915) in 23S rRNA + S-adenosyl-L-homocysteine + H(+). Its function is as follows. Specifically methylates the pseudouridine at position 1915 (m3Psi1915) in 23S rRNA. This Legionella pneumophila (strain Paris) protein is Ribosomal RNA large subunit methyltransferase H.